Consider the following 346-residue polypeptide: G-protein coupled receptor 42 (346 aa).

The Extracellular portion of the chain corresponds to 1–19; sequence MDTGPDQSYFSGNHWFVFS. A helical transmembrane segment spans residues 20 to 40; it reads VYLLTFLVGLPLNLLALVVFV. The Cytoplasmic segment spans residues 41-47; sequence GKLRCRP. A helical transmembrane segment spans residues 48–68; it reads VAVDVLLLNLTASDLLLLLFL. Topologically, residues 69–90 are extracellular; the sequence is PFRMVEAANGMHWPLPFILCPL. A helical membrane pass occupies residues 91-111; that stretch reads SGFIFFTTIYLTALFLAAVSI. The Cytoplasmic portion of the chain corresponds to 112–132; sequence ERFLSVAHPLWYKTRPRLGQA. A helical membrane pass occupies residues 133–153; it reads GLVSVACWLLASAHCSVVYVI. Topologically, residues 154–178 are extracellular; it reads EFSGDISHSQGTNGTCYLEFRKDQL. Residue Asn166 is glycosylated (N-linked (GlcNAc...) asparagine). The chain crosses the membrane as a helical span at residues 179-199; that stretch reads AILLPVRLEMAVVLFVVPLII. Residues 200–222 lie on the Cytoplasmic side of the membrane; sequence TSYCYSRLVWILGRGGSHRRQRR. The chain crosses the membrane as a helical span at residues 223–243; it reads VAGLVAATLLNFLVCFGPYNV. Residues 244–258 are Extracellular-facing; it reads SHVVGYICGESPVWR. A helical transmembrane segment spans residues 259–279; sequence IYVTLLSTLNSCVDPFVYYFS. Residues 280-346 lie on the Cytoplasmic side of the membrane; that stretch reads SSGFQADFHE…TGGQVACAEN (67 aa). A compositionally biased stretch (basic and acidic residues) spans 307 to 330; the sequence is MELKEQKGGEEQRADRPAERKTSE. The tract at residues 307 to 346 is disordered; it reads MELKEQKGGEEQRADRPAERKTSEHSQGCGTGGQVACAEN.

This sequence belongs to the G-protein coupled receptor 1 family.

It localises to the cell membrane. Functionally, g protein-coupled receptor that is activated by short chain fatty acids (SCFAs), such as propionate. Hence may play a role in the regulation of whole-body energy homeostasis and/or in intestinal immunity. The chain is G-protein coupled receptor 42 (GPR42) from Homo sapiens (Human).